Here is a 310-residue protein sequence, read N- to C-terminus: p-hydroxybenzoic acid efflux pump subunit AaeA (310 aa).

A helical transmembrane segment spans residues 12 to 32 (AITVVLVVLAFIAIFRAWSFY).

The protein belongs to the membrane fusion protein (MFP) (TC 8.A.1) family.

It localises to the cell inner membrane. Forms an efflux pump with AaeB. The polypeptide is p-hydroxybenzoic acid efflux pump subunit AaeA (Cronobacter sakazakii (strain ATCC BAA-894) (Enterobacter sakazakii)).